A 291-amino-acid chain; its full sequence is Formamidopyrimidine-DNA glycosylase (291 aa).

The Schiff-base intermediate with DNA role is filled by P2. The active-site Proton donor is E3. Catalysis depends on K60, which acts as the Proton donor; for beta-elimination activity. DNA-binding residues include H108 and R127. The FPG-type zinc finger occupies 257–291 (WVYRRGGQACRICSTPIRRESLCGRGTHWCPNCQR). The active-site Proton donor; for delta-elimination activity is R281.

It belongs to the FPG family. As to quaternary structure, monomer. Requires Zn(2+) as cofactor.

The enzyme catalyses Hydrolysis of DNA containing ring-opened 7-methylguanine residues, releasing 2,6-diamino-4-hydroxy-5-(N-methyl)formamidopyrimidine.. It carries out the reaction 2'-deoxyribonucleotide-(2'-deoxyribose 5'-phosphate)-2'-deoxyribonucleotide-DNA = a 3'-end 2'-deoxyribonucleotide-(2,3-dehydro-2,3-deoxyribose 5'-phosphate)-DNA + a 5'-end 5'-phospho-2'-deoxyribonucleoside-DNA + H(+). In terms of biological role, involved in base excision repair of DNA damaged by oxidation or by mutagenic agents. Acts as a DNA glycosylase that recognizes and removes damaged bases. Has a preference for oxidized purines, such as 7,8-dihydro-8-oxoguanine (8-oxoG). Has AP (apurinic/apyrimidinic) lyase activity and introduces nicks in the DNA strand. Cleaves the DNA backbone by beta-delta elimination to generate a single-strand break at the site of the removed base with both 3'- and 5'-phosphates. The protein is Formamidopyrimidine-DNA glycosylase of Prochlorococcus marinus (strain MIT 9313).